The primary structure comprises 101 residues: Small ribosomal subunit protein uS14 (101 aa).

The protein belongs to the universal ribosomal protein uS14 family. Part of the 30S ribosomal subunit. Contacts proteins S3 and S10.

Binds 16S rRNA, required for the assembly of 30S particles and may also be responsible for determining the conformation of the 16S rRNA at the A site. The sequence is that of Small ribosomal subunit protein uS14 from Cellvibrio japonicus (strain Ueda107) (Pseudomonas fluorescens subsp. cellulosa).